A 541-amino-acid chain; its full sequence is Propionyl-CoA carboxylase beta chain, mitochondrial (541 aa).

A mitochondrion-targeting transit peptide spans 1–28; it reads MAAAIRIRAVAAGARLSVLNCGLGITTR. The 259-residue stretch at 34–292 folds into the CoA carboxyltransferase N-terminal domain; sequence PVSVKERIDN…SSQDPAPIRE (259 aa). The segment at 34 to 535 is carboxyltransferase; sequence PVSVKERIDN…SKKVHRPWRK (502 aa). Ser73 carries the phosphoserine modification. Lys101 is modified (N6-acetyllysine; alternate). Residue Lys101 is modified to N6-succinyllysine; alternate. At Lys250 the chain carries N6-succinyllysine. The CoA carboxyltransferase C-terminal domain maps to 296–535; it reads PSDRLVPELD…SKKVHRPWRK (240 aa). The acyl-CoA binding stretch occupies residues 327 to 360; the sequence is DEREFFEIMPSYAKNIVVGFARMNGRTVGIVGNQ. Residues Lys476 and Lys491 each carry the N6-acetyllysine; alternate modification. Residues Lys476 and Lys491 each carry the N6-succinyllysine; alternate modification.

Belongs to the AccD/PCCB family. The holoenzyme is a dodecamer composed of 6 PCCA/alpha subunits and 6 PCCB/beta subunits. Broadly expressed. Most abundantly expressed in the kidney, liver, small intestine and stomach.

The protein localises to the mitochondrion matrix. It catalyses the reaction propanoyl-CoA + hydrogencarbonate + ATP = (S)-methylmalonyl-CoA + ADP + phosphate + H(+). It carries out the reaction butanoyl-CoA + hydrogencarbonate + ATP = (2S)-ethylmalonyl-CoA + ADP + phosphate + H(+). It functions in the pathway metabolic intermediate metabolism; propanoyl-CoA degradation; succinyl-CoA from propanoyl-CoA: step 1/3. Functionally, this is one of the 2 subunits of the biotin-dependent propionyl-CoA carboxylase (PCC), a mitochondrial enzyme involved in the catabolism of odd chain fatty acids, branched-chain amino acids isoleucine, threonine, methionine, and valine and other metabolites. Propionyl-CoA carboxylase catalyzes the carboxylation of propionyl-CoA/propanoyl-CoA to D-methylmalonyl-CoA/(S)-methylmalonyl-CoA. Within the holoenzyme, the alpha subunit catalyzes the ATP-dependent carboxylation of the biotin carried by the biotin carboxyl carrier (BCC) domain, while the beta subunit then transfers the carboxyl group from carboxylated biotin to propionyl-CoA. Propionyl-CoA carboxylase also significantly acts on butyryl-CoA/butanoyl-CoA, which is converted to ethylmalonyl-CoA/(2S)-ethylmalonyl-CoA. Other alternative minor substrates include (2E)-butenoyl-CoA/crotonoyl-CoA. The protein is Propionyl-CoA carboxylase beta chain, mitochondrial of Mus musculus (Mouse).